A 1421-amino-acid polypeptide reads, in one-letter code: Cytoadherence-linked asexual protein 3.2 (1421 aa).

Residues 1 to 24 (MVSFFKTPIIIFFFLLCLNEKVLC) form the signal peptide. 4 disulfides stabilise this stretch: Cys335–Cys363, Cys409–Cys415, Cys519–Cys547, and Cys523–Cys544. The chain crosses the membrane as a helical span at residues 1203–1223 (NFFMELANGFMYAFCFFAISQ). A disulfide bridge links Cys1352 with Cys1355. Positions 1371-1413 (GDKNTNETTEIKKQTSTYIDTEKMNEADSADSDDEKDFDTPDN) are disordered. Residues 1398–1412 (DSADSDDEKDFDTPD) are compositionally biased toward acidic residues.

As to quaternary structure, component of the RhopH complex. RhopH complex is at least composed of CLAG3.1/CLAG3.2, RhopH2 and RhopH3 with a 1:1:1 subunit stoichiometry. CLAG3.1/CLAG3.2 mediates subunit association through independent contacts with RhopH2 and RhopH3, which do not directly interact with one another. Interacts with RhopH2. Interacts with RhopH3.

The protein resides in the host cell membrane. It is found in the parasitophorous vacuole membrane. Its subcellular location is the host cytoplasm. The protein localises to the cytoplasmic vesicle. It localises to the secretory vesicle. The protein resides in the rhoptry. Its function is as follows. Participates in the formation of new permeability pathways in Plasmodium-infected erythrocytes enabling the uptake of nutrients from the blood plasma. This chain is Cytoadherence-linked asexual protein 3.2, found in Plasmodium falciparum.